The following is a 541-amino-acid chain: Cytochrome P450 monooxygenase claU (541 aa).

A helical membrane pass occupies residues 12–32; sequence VIDTLVILFSTWAFLGLIRVI. Cys-480 is a binding site for heme.

The protein belongs to the cytochrome P450 family. The cofactor is heme.

The protein localises to the membrane. It participates in secondary metabolite biosynthesis; terpenoid biosynthesis. Functionally, cytochrome P450 monooxygenase; part of the gene cluster that mediates the biosynthesis of clavilactone A, a meroterpenoid that features a unique benzo-fused ten-membered carbocyclic ring unit with an alpha,beta-epoxy-gamma-lactone moiety, forming an intriguing 10/5/3 tricyclic nested skeleton. Cytochrome P450 monooxygenases claO, claP, claQ, claU, and claW are close orthologs, suggesting that a redundant function or pseudogenes are present in the cla cluster. These monoxygenases are not involved in clavilactone A biosynthesis nor its modification. ClaR, ClaS and ClaT are sufficient to produce clavilactone A. The biosynthesis begins with the prenyltransferase claS that transfers geranyl pyrophosphate (GPP) to hydroquinone to produces geranylhydroquinone. The cytochrome P450 monooxygenase claR then catalyzes the diradical coupling reaction between the intramolecular hydroquinone and allyl moieties to form the benzo-fused ten-membered carbocyclic ring unit of wigantol. Finally the cytochrome P450 monooxygenase claT exquisitely and stereoselectively assembles the alpha,beta-epoxy-gamma-lactone moiety, producing clavilactone A via arnebinol A. This is Cytochrome P450 monooxygenase claU from Ampulloclitocybe clavipes (Club foot).